A 505-amino-acid polypeptide reads, in one-letter code: RNA-splicing ligase RtcB homolog (505 aa).

Residues aspartate 119, cysteine 122, histidine 227, and histidine 259 each coordinate Mn(2+). 226–230 (NHYAE) serves as a coordination point for GMP. The residue at position 300 (serine 300) is a Phosphoserine. Histidine 353 is a binding site for Mn(2+). Residues 353 to 354 (HN), 402 to 405 (GGTM), serine 409, and 428 to 431 (HGAG) each bind GMP. Catalysis depends on histidine 428, which acts as the GMP-histidine intermediate. Lysine 496 is covalently cross-linked (Glycyl lysine isopeptide (Lys-Gly) (interchain with G-Cter in SUMO2)). Residue lysine 504 participates in GMP binding.

This sequence belongs to the RtcB family. As to quaternary structure, catalytic component of the tRNA-splicing ligase complex. Requires Mn(2+) as cofactor.

Its subcellular location is the nucleus. The protein resides in the cytoplasm. The enzyme catalyses a 3'-end 3'-phospho-ribonucleotide-RNA + a 5'-end dephospho-ribonucleoside-RNA + GTP = a ribonucleotidyl-ribonucleotide-RNA + GMP + diphosphate. The catalysed reaction is a 3'-end 2',3'-cyclophospho-ribonucleotide-RNA + a 5'-end dephospho-ribonucleoside-RNA + GTP + H2O = a ribonucleotidyl-ribonucleotide-RNA + GMP + diphosphate + H(+). In terms of biological role, catalytic subunit of the tRNA-splicing ligase complex that acts by directly joining spliced tRNA halves to mature-sized tRNAs by incorporating the precursor-derived splice junction phosphate into the mature tRNA as a canonical 3',5'-phosphodiester. May act as an RNA ligase with broad substrate specificity, and may function toward other RNAs. This chain is RNA-splicing ligase RtcB homolog, found in Macaca fascicularis (Crab-eating macaque).